Here is a 401-residue protein sequence, read N- to C-terminus: Exodeoxyribonuclease 7 large subunit (401 aa).

Belongs to the XseA family. As to quaternary structure, heterooligomer composed of large and small subunits.

It localises to the cytoplasm. It carries out the reaction Exonucleolytic cleavage in either 5'- to 3'- or 3'- to 5'-direction to yield nucleoside 5'-phosphates.. In terms of biological role, bidirectionally degrades single-stranded DNA into large acid-insoluble oligonucleotides, which are then degraded further into small acid-soluble oligonucleotides. The polypeptide is Exodeoxyribonuclease 7 large subunit (Thermoanaerobacter pseudethanolicus (strain ATCC 33223 / 39E) (Clostridium thermohydrosulfuricum)).